We begin with the raw amino-acid sequence, 209 residues long: Outer-membrane lipoprotein LolB (209 aa).

The signal sequence occupies residues 1–21 (MNNMKTFKFLTALFATAILTA). C22 is lipidated: N-palmitoyl cysteine. C22 carries the S-diacylglycerol cysteine lipid modification.

The protein belongs to the LolB family. Monomer.

It localises to the cell outer membrane. Plays a critical role in the incorporation of lipoproteins in the outer membrane after they are released by the LolA protein. In Haemophilus influenzae (strain 86-028NP), this protein is Outer-membrane lipoprotein LolB.